We begin with the raw amino-acid sequence, 1146 residues long: Error-prone DNA polymerase (1146 aa).

Disordered regions lie at residues 1 to 43 and 154 to 178; these read MGWG…WSRK and ATPE…PPGP. Over residues 12–26 the composition is skewed to basic and acidic residues; it reads ELERVLSGRPGRTDP.

This sequence belongs to the DNA polymerase type-C family. DnaE2 subfamily.

The protein localises to the cytoplasm. The catalysed reaction is DNA(n) + a 2'-deoxyribonucleoside 5'-triphosphate = DNA(n+1) + diphosphate. In terms of biological role, DNA polymerase involved in damage-induced mutagenesis and translesion synthesis (TLS). It is not the major replicative DNA polymerase. The sequence is that of Error-prone DNA polymerase from Nocardia farcinica (strain IFM 10152).